The chain runs to 582 residues: Proline--tRNA ligase (582 aa).

It belongs to the class-II aminoacyl-tRNA synthetase family. ProS type 1 subfamily. As to quaternary structure, homodimer.

The protein resides in the cytoplasm. It carries out the reaction tRNA(Pro) + L-proline + ATP = L-prolyl-tRNA(Pro) + AMP + diphosphate. Its function is as follows. Catalyzes the attachment of proline to tRNA(Pro) in a two-step reaction: proline is first activated by ATP to form Pro-AMP and then transferred to the acceptor end of tRNA(Pro). As ProRS can inadvertently accommodate and process non-cognate amino acids such as alanine and cysteine, to avoid such errors it has two additional distinct editing activities against alanine. One activity is designated as 'pretransfer' editing and involves the tRNA(Pro)-independent hydrolysis of activated Ala-AMP. The other activity is designated 'posttransfer' editing and involves deacylation of mischarged Ala-tRNA(Pro). The misacylated Cys-tRNA(Pro) is not edited by ProRS. The chain is Proline--tRNA ligase from Mycobacterium ulcerans (strain Agy99).